A 378-amino-acid chain; its full sequence is Cytochrome b (378 aa).

Helical transmembrane passes span 34-54 (FGSLLGLCLIIQILTGLFLAM), 78-99 (WLLRTLHANGASFFFICIYLHV), 114-134 (WLIGVIILFLVMGTAFMGYVL), and 179-199 (FFTFHFILPFIVLAMTMIHLL). Heme b contacts are provided by His84 and His98. His183 and His197 together coordinate heme b. Position 202 (His202) interacts with a ubiquinone. 4 consecutive transmembrane segments (helical) span residues 227–247 (FKDIVGFTVMIFILISLVLIS), 289–309 (LGGVIALVLSIAILMILPFYN), 321–341 (INQVMFWSMLVTVILLTWIGA), and 348–368 (YVLIGQILTVMYFLYYLVNPL).

Belongs to the cytochrome b family. The main subunits of complex b-c1 are: cytochrome b, cytochrome c1 and the Rieske protein. Heme b is required as a cofactor.

It localises to the mitochondrion inner membrane. Functionally, component of the ubiquinol-cytochrome c reductase complex (complex III or cytochrome b-c1 complex) that is part of the mitochondrial respiratory chain. The b-c1 complex mediates electron transfer from ubiquinol to cytochrome c. Contributes to the generation of a proton gradient across the mitochondrial membrane that is then used for ATP synthesis. This chain is Cytochrome b (mt:Cyt-b), found in Drosophila sechellia (Fruit fly).